Consider the following 81-residue polypeptide: Toxin F-VIII (81 aa).

A signal peptide spans 1–21 (MKTLLLTLLVVTIVCLDLAST). Intrachain disulfides connect C24-C43, C38-C60, C62-C73, and C74-C79.

This sequence belongs to the three-finger toxin family. Short-chain subfamily. Orphan group XI sub-subfamily. Expressed by the venom gland.

The protein localises to the secreted. Functionally, is cytotoxic against A549 cells (LC(50)=106 ug/ml). This is Toxin F-VIII from Dendroaspis angusticeps (Eastern green mamba).